The primary structure comprises 1034 residues: Sodium bicarbonate cotransporter 3 (1034 aa).

Disordered stretches follow at residues 1–31 (MEADGAGEQMRPLLTRGPDEEAVVDLGKTSS) and 53–99 (HVPF…SQRV). At 1–476 (MEADGAGEQM…DFKDALSLQC (476 aa)) the chain is on the extracellular side. Ser57, Ser60, Ser89, and Ser155 each carry phosphoserine. Residues 60–77 (SRRRHKHRGHKHHHRRRK) show a composition bias toward basic residues. Residues 78-90 (DKDSDKEDGRESP) are compositionally biased toward basic and acidic residues. N-linked (GlcNAc...) asparagine glycosylation is present at Asn176. A phosphoserine mark is found at Ser238, Ser250, Ser260, Met263, Ser268, and Ser271. The segment covering 250–260 (SAPGNLDNSKS) has biased composition (polar residues). Residues 250 to 276 (SAPGNLDNSKSGEMKGNGSGGSRENST) form a disordered region. The N-linked (GlcNAc...) asparagine glycan is linked to Asn274. A phosphoserine mark is found at Ser275 and Ser424. The helical transmembrane segment at 477–497 (LASILFLYCACMSPVITFGGL) threads the bilayer. Residues 498–505 (LGEATEGR) lie on the Cytoplasmic side of the membrane. Residues 506–526 (ISAIESLFGASLTGIAYSLFA) form a helical membrane-spanning segment. The Extracellular segment spans residues 527–563 (GQPLTILGSTGPVLVFEKILFKFCRDYHLSYLSLRTS). Residues 564–584 (IGLWTSFLCIVLVATDASSLV) form a helical membrane-spanning segment. Residues 585-593 (CYITRFTEE) are Cytoplasmic-facing. Residues 594-614 (AFAALICIIFIYEALEKLFHL) form a helical membrane-spanning segment. Residues 615–685 (GEIYAFNMHN…MFVGSACGPH (71 aa)) lie on the Extracellular side of the membrane. Cys634 and Cys636 form a disulfide bridge. 3 N-linked (GlcNAc...) asparagine glycosylation sites follow: Asn644, Asn654, and Asn664. Cys670 and Cys682 are joined by a disulfide. The helical transmembrane segment at 686 to 706 (GPYVPDVLFWCVVLFFTTFFL) threads the bilayer. Residues 707-729 (SSFLKQFKTKGYFPTKVRSTISD) lie on the Cytoplasmic side of the membrane. The helical transmembrane segment at 730 to 750 (FAVFLTIVIMVAIDYLVGIPS) threads the bilayer. Residues 751 to 776 (PKLHVPEKFEPTDPSRGWIISPLGDN) lie on the Extracellular side of the membrane. Residues 777 to 797 (PWWTLLIAAVPALLCTILIFM) traverse the membrane as a helical segment. At 798 to 812 (DQQITAVIINRKEHK) the chain is on the cytoplasmic side. A helical membrane pass occupies residues 813–833 (LKFIPMPVLYGVFLYMGVSSL). The interval 815–915 (FIPMPVLYGV…MDLCFTKREL (101 aa)) is essential for cell membrane localization and transport activity. Residues 834 to 876 (KGIQFFDRIKLFGMPAKHQPDLIYLRYVPLWKVHVFTVVQLTC) lie on the Extracellular side of the membrane. Residues 877–897 (LVLLWVIKASAAAVVFPMMVL) traverse the membrane as a helical segment. The Cytoplasmic segment spans residues 898 to 1034 (ALVFVRKLMD…KKYMDAETSL (137 aa)). Positions 918–920 (LDD) are CA2-binding. A disordered region spans residues 926–946 (KKKKEDDKKKKEKEEAERMLQ). Phosphothreonine is present on Thr951. A phosphoserine mark is found at Ser960 and Ser1033. The PDZ-binding signature appears at 1031 to 1034 (ETSL).

Belongs to the anion exchanger (TC 2.A.31) family. Forms a complex with ATP6V1B1 and NHERF1/EBP50. Interacts in a pH dependent-manner with CA2/carbonic anhydrase 2. Interacts with CFTR through NHERF1/EBP50. Interacts with USH1C. In terms of tissue distribution, expressed in the spiral ligament throughout the cochlea and in photoreceptors of the outer plexiform layer of the retina (at protein level).

It is found in the basolateral cell membrane. The protein localises to the apical cell membrane. It localises to the cell projection. The protein resides in the stereocilium. Its subcellular location is the cell membrane. It catalyses the reaction hydrogencarbonate(in) + Na(+)(in) = hydrogencarbonate(out) + Na(+)(out). With respect to regulation, activity is inhibited by 4,4'-di-isothiocyanatostilbene-2,2'-disulfonic acid (DIDS - an inhibitor of several anion channels and transporters). In terms of biological role, electroneutral sodium- and bicarbonate-dependent cotransporter with a Na(+):HCO3(-) 1:1 stoichiometry. Mediates the sodium-dependent bicarbonate transport important for pH recovery after acid load as well as for regulation of steady-state pH in the duodenum and vascular smooth muscle cells. Plays a key role in macrophage acidification, mediating bicarbonate import into the cytoplasm which is crucial for net acid extrusion and maintenance of cytoplasmic pH during phagocytosis. Provides cellular bicarbonate for de novo purine and pyrimidine synthesis and is a key mediator of de novo nucleotide synthesis downstream of mTORC1 signaling in proliferating cells. May be involved in maintaining locomotor activity, exploratory behavior, and hearing. The sequence is that of Sodium bicarbonate cotransporter 3 (Slc4a7) from Mus musculus (Mouse).